Consider the following 102-residue polypeptide: Large ribosomal subunit protein bL21 (102 aa).

Belongs to the bacterial ribosomal protein bL21 family. As to quaternary structure, part of the 50S ribosomal subunit. Contacts protein L20.

This protein binds to 23S rRNA in the presence of protein L20. The polypeptide is Large ribosomal subunit protein bL21 (Oleidesulfovibrio alaskensis (strain ATCC BAA-1058 / DSM 17464 / G20) (Desulfovibrio alaskensis)).